The following is a 1910-amino-acid chain: A disintegrin and metalloproteinase with thrombospondin motifs 20 (1910 aa).

The signal sequence occupies residues 1–21 (MWVAKWLTGLLYHLSLFITRS). A propeptide spanning residues 22 to 253 (WEVDFHPRQE…DERRHSRKKR (232 aa)) is cleaved from the precursor. Residues asparagine 92 and asparagine 191 are each glycosylated (N-linked (GlcNAc...) asparagine). The Peptidase M12B domain occupies 259–467 (RYIEIMVTAD…GYGECLLDKP (209 aa)). 11 disulfides stabilise this stretch: cysteine 334–cysteine 387, cysteine 363–cysteine 369, cysteine 381–cysteine 462, cysteine 419–cysteine 446, cysteine 489–cysteine 511, cysteine 500–cysteine 521, cysteine 506–cysteine 540, cysteine 534–cysteine 545, cysteine 568–cysteine 605, cysteine 572–cysteine 610, and cysteine 583–cysteine 595. Residue histidine 403 participates in Zn(2+) binding. Glutamate 404 is a catalytic residue. 2 residues coordinate Zn(2+): histidine 407 and histidine 413. N-linked (GlcNAc...) asparagine glycosylation occurs at asparagine 445. In terms of domain architecture, Disintegrin spans 468–555 (DEEIYNLPSE…VNKETETRPV (88 aa)). The TSP type-1 1 domain maps to 556–611 (NGEWGPWEPYSSCSRTCGGGIESATRRCNRPEPRNGGNYCVGRRMKFRSCNTDSCP). Residues asparagine 702, asparagine 717, asparagine 728, asparagine 809, and asparagine 870 are each glycosylated (N-linked (GlcNAc...) asparagine). The tract at residues 724 to 846 (TGVFNSSHYG…FNIPLEERSD (123 aa)) is spacer. TSP type-1 domains lie at 846–904 (DMFT…NTDC), 905–961 (ELRW…QELC), 966–1023 (VFTR…FSCP), 1024–1073 (SWAA…SPCE), 1076–1135 (TCAS…TPCS), 1152–1206 (KMAQ…DCFT), 1207–1264 (PCGE…AACP), 1304–1356 (RGNQ…QCGP), 1358–1416 (PCPQ…HACP), 1417–1475 (ADVS…VRCP), 1476–1531 (SWKA…QDCV), 1535–1588 (GMER…NPPC), 1589–1652 (NYIV…INSC), and 1654–1710 (HLAT…NDCK). Asparagine 1061 carries an N-linked (GlcNAc...) asparagine glycan. An N-linked (GlcNAc...) asparagine glycan is attached at asparagine 1456. Asparagine 1542 and asparagine 1572 each carry an N-linked (GlcNAc...) asparagine glycan. Residues 1711-1910 (SFTTCKEIQV…MTTGLPIQVI (200 aa)) enclose the GON domain. N-linked (GlcNAc...) asparagine glycosylation is found at asparagine 1763, asparagine 1781, and asparagine 1852.

Requires Zn(2+) as cofactor. The precursor is cleaved by a furin endopeptidase. Post-translationally, glycosylated. Can be O-fucosylated by POFUT2 on a serine or a threonine residue found within the consensus sequence C1-X(2)-(S/T)-C2-G of the TSP type-1 repeat domains where C1 and C2 are the first and second cysteine residue of the repeat, respectively. Fucosylated repeats can then be further glycosylated by the addition of a beta-1,3-glucose residue by the glucosyltransferase, B3GALTL. Fucosylation mediates the efficient secretion of ADAMTS family members. Can also be C-glycosylated with one or two mannose molecules on tryptophan residues within the consensus sequence W-X-X-W of the TPRs, and N-glycosylated. These other glycosylations can also facilitate secretion. As to expression, very sparingly expressed, although is detected at low levels in testis, prostate, ovary, heart, placenta, lung and pancreas. Overexpressed in several brain, colon and breast carcinomas.

It localises to the secreted. The protein localises to the extracellular space. Its subcellular location is the extracellular matrix. May play a role in tissue-remodeling process occurring in both normal and pathological conditions. May have a protease-independent function in the transport from the endoplasmic reticulum to the Golgi apparatus of secretory cargos, mediated by the GON domain. This is A disintegrin and metalloproteinase with thrombospondin motifs 20 (ADAMTS20) from Homo sapiens (Human).